The following is a 275-amino-acid chain: Methylglyoxal reductase DkgA (275 aa).

Tyrosine 51 (proton donor) is an active-site residue. Histidine 107 is a substrate binding site. 187-241 (SPLAQGGEGVFDQKVIRELADKYGKTPAQIVIRWHLDCGLVVIPKSVTPSRIAEN) provides a ligand contact to NADP(+).

The protein belongs to the aldo/keto reductase family. As to quaternary structure, monomer.

The protein resides in the cytoplasm. The enzyme catalyses hydroxyacetone + NADP(+) = methylglyoxal + NADPH + H(+). Functionally, aldo-keto reductase that significantly contributes to cellular methylglyoxal detoxification by catalyzing the NADPH-dependent conversion of methylglyoxal to acetol. This Salmonella typhimurium (strain LT2 / SGSC1412 / ATCC 700720) protein is Methylglyoxal reductase DkgA.